Reading from the N-terminus, the 216-residue chain is MKGLFISGSGTNVGKTFIAQYLIKFLTNILKVRVRKPVESDCKNKNGKLIPKDALLLSKACNIIESIDKICRYKFQACSSAQIASQALGLKLTLDDLVDACIADEFVVVEGAGGLLSPIATKTLNSDLVQAINVPVVLVIKDELGAVNQALLSINAAQHYKLNISMVVLNQIYPNLLGNEKEITQYTNANIVVFNQNDLKSFERQIEKILLADLIK.

12 to 17 (NVGKTF) contacts ATP. Thr-16 lines the Mg(2+) pocket. Lys-36 is a catalytic residue. Residue Ser-40 coordinates substrate. Residues Asp-53, 110-113 (EGAG), and 170-171 (NQ) each bind ATP. 2 residues coordinate Mg(2+): Asp-53 and Glu-110.

This sequence belongs to the dethiobiotin synthetase family. As to quaternary structure, homodimer. Mg(2+) serves as cofactor.

The protein resides in the cytoplasm. The catalysed reaction is (7R,8S)-7,8-diammoniononanoate + CO2 + ATP = (4R,5S)-dethiobiotin + ADP + phosphate + 3 H(+). Its pathway is cofactor biosynthesis; biotin biosynthesis; biotin from 7,8-diaminononanoate: step 1/2. Its function is as follows. Catalyzes a mechanistically unusual reaction, the ATP-dependent insertion of CO2 between the N7 and N8 nitrogen atoms of 7,8-diaminopelargonic acid (DAPA, also called 7,8-diammoniononanoate) to form a ureido ring. The polypeptide is ATP-dependent dethiobiotin synthetase BioD (Vesicomyosocius okutanii subsp. Calyptogena okutanii (strain HA)).